The sequence spans 233 residues: Leucyl/phenylalanyl-tRNA--protein transferase (233 aa).

It belongs to the L/F-transferase family.

The protein resides in the cytoplasm. The catalysed reaction is N-terminal L-lysyl-[protein] + L-leucyl-tRNA(Leu) = N-terminal L-leucyl-L-lysyl-[protein] + tRNA(Leu) + H(+). The enzyme catalyses N-terminal L-arginyl-[protein] + L-leucyl-tRNA(Leu) = N-terminal L-leucyl-L-arginyl-[protein] + tRNA(Leu) + H(+). It catalyses the reaction L-phenylalanyl-tRNA(Phe) + an N-terminal L-alpha-aminoacyl-[protein] = an N-terminal L-phenylalanyl-L-alpha-aminoacyl-[protein] + tRNA(Phe). Functionally, functions in the N-end rule pathway of protein degradation where it conjugates Leu, Phe and, less efficiently, Met from aminoacyl-tRNAs to the N-termini of proteins containing an N-terminal arginine or lysine. This is Leucyl/phenylalanyl-tRNA--protein transferase from Laribacter hongkongensis (strain HLHK9).